A 474-amino-acid polypeptide reads, in one-letter code: Bifunctional protein HldE (474 aa).

The segment at 1-318 (MKLSMPRFDQ…RAVQREQGSE (318 aa)) is ribokinase. 194–197 (NLSE) is an ATP binding site. Residue Asp-263 is part of the active site. The tract at residues 343 to 474 (FTNGCFDILH…AIVEKIRQKG (132 aa)) is cytidylyltransferase.

It in the N-terminal section; belongs to the carbohydrate kinase PfkB family. This sequence in the C-terminal section; belongs to the cytidylyltransferase family. Homodimer.

The catalysed reaction is D-glycero-beta-D-manno-heptose 7-phosphate + ATP = D-glycero-beta-D-manno-heptose 1,7-bisphosphate + ADP + H(+). It catalyses the reaction D-glycero-beta-D-manno-heptose 1-phosphate + ATP + H(+) = ADP-D-glycero-beta-D-manno-heptose + diphosphate. Its pathway is nucleotide-sugar biosynthesis; ADP-L-glycero-beta-D-manno-heptose biosynthesis; ADP-L-glycero-beta-D-manno-heptose from D-glycero-beta-D-manno-heptose 7-phosphate: step 1/4. The protein operates within nucleotide-sugar biosynthesis; ADP-L-glycero-beta-D-manno-heptose biosynthesis; ADP-L-glycero-beta-D-manno-heptose from D-glycero-beta-D-manno-heptose 7-phosphate: step 3/4. Its function is as follows. Catalyzes the phosphorylation of D-glycero-D-manno-heptose 7-phosphate at the C-1 position to selectively form D-glycero-beta-D-manno-heptose-1,7-bisphosphate. In terms of biological role, catalyzes the ADP transfer from ATP to D-glycero-beta-D-manno-heptose 1-phosphate, yielding ADP-D-glycero-beta-D-manno-heptose. The polypeptide is Bifunctional protein HldE (Pseudomonas paraeruginosa (strain DSM 24068 / PA7) (Pseudomonas aeruginosa (strain PA7))).